The sequence spans 273 residues: MTKDIMDAVFIKEMAKTTSNLYRLGWDERNGGNITYLLDEKEVVEYLDVKQIIRTIPMDFDGKKLAGKYFLVTGSGKYFKNVEEAPAVNLGVIQVSEDGKAVHLLWGYTDSGLPTSELPAHFMSHIARLSVDPENRVVMHCHATHLLAMTFTHELTEREFTRTLWQMCTECLVVFPEGVGIIPWLVPGTNEIGEATSEKMKENRLIVWPHHGIYGAGKSMDETFGLIETAEKAAEVYTIVMSQGGIKQAITDEQLKALGERFGVEAKAGYLIN.

The active site involves Glu117. His140, His142, and His211 together coordinate Zn(2+).

Belongs to the aldolase class II family. RhaD subfamily. The cofactor is Zn(2+).

Its subcellular location is the cytoplasm. The catalysed reaction is L-rhamnulose 1-phosphate = (S)-lactaldehyde + dihydroxyacetone phosphate. The protein operates within carbohydrate degradation; L-rhamnose degradation; glycerone phosphate from L-rhamnose: step 3/3. Functionally, catalyzes the reversible cleavage of L-rhamnulose-1-phosphate to dihydroxyacetone phosphate (DHAP) and L-lactaldehyde. The protein is Rhamnulose-1-phosphate aldolase of Listeria monocytogenes serotype 4b (strain F2365).